Consider the following 210-residue polypeptide: Nucleoside triphosphate pyrophosphatase (210 aa).

Asp80 (proton acceptor) is an active-site residue.

This sequence belongs to the Maf family. The cofactor is a divalent metal cation.

The protein localises to the cytoplasm. It carries out the reaction a ribonucleoside 5'-triphosphate + H2O = a ribonucleoside 5'-phosphate + diphosphate + H(+). It catalyses the reaction a 2'-deoxyribonucleoside 5'-triphosphate + H2O = a 2'-deoxyribonucleoside 5'-phosphate + diphosphate + H(+). Functionally, nucleoside triphosphate pyrophosphatase. May have a dual role in cell division arrest and in preventing the incorporation of modified nucleotides into cellular nucleic acids. This chain is Nucleoside triphosphate pyrophosphatase, found in Mycobacterium sp. (strain JLS).